Reading from the N-terminus, the 192-residue chain is Sarcoplasmic calcium-binding protein, alpha-B and -A chains (192 aa).

At alanine 1 the chain carries N-acetylalanine. 4 consecutive EF-hand domains span residues 4–39 (WDNR…NTLI), 56–91 (IMRN…HCQG), 100–135 (AFKV…RSAF), and 136–171 (AEVK…YAQF). Aspartate 17, aspartate 19, aspartate 21, aspartate 28, aspartate 69, asparagine 71, aspartate 73, glutamate 75, glutamate 80, aspartate 113, asparagine 115, aspartate 117, lysine 119, and glutamate 124 together coordinate Ca(2+).

In terms of assembly, SCPs from crayfish, lobster, and shrimp are polymorphic dimers; three isotypes (alpha-alpha, alpha-beta, and beta-beta) have been identified.

In terms of biological role, like parvalbumins, SCPs seem to be more abundant in fast contracting muscles, but no functional relationship can be established from this distribution. The chain is Sarcoplasmic calcium-binding protein, alpha-B and -A chains from Penaeus sp. (Penoeid shrimp).